We begin with the raw amino-acid sequence, 382 residues long: Homoserine O-acetyltransferase (382 aa).

One can recognise an AB hydrolase-1 domain in the interval 50 to 360 (NAVLICHALT…DKGHDAFLLD (311 aa)). Serine 155 (nucleophile) is an active-site residue. Residue arginine 225 coordinates substrate. Active-site residues include aspartate 321 and histidine 354. Aspartate 355 is a binding site for substrate.

The protein belongs to the AB hydrolase superfamily. MetX family. As to quaternary structure, homodimer.

The protein resides in the cytoplasm. It carries out the reaction L-homoserine + acetyl-CoA = O-acetyl-L-homoserine + CoA. It functions in the pathway amino-acid biosynthesis; L-methionine biosynthesis via de novo pathway; O-acetyl-L-homoserine from L-homoserine: step 1/1. In terms of biological role, transfers an acetyl group from acetyl-CoA to L-homoserine, forming acetyl-L-homoserine. This Caulobacter vibrioides (strain ATCC 19089 / CIP 103742 / CB 15) (Caulobacter crescentus) protein is Homoserine O-acetyltransferase.